Reading from the N-terminus, the 309-residue chain is Thiamine-monophosphate kinase (309 aa).

Positions 25, 39, 40, and 41 each coordinate Mg(2+). A substrate-binding site is contributed by aspartate 48. Aspartate 69 and aspartate 117 together coordinate Mg(2+). Residues 116-117 (GD) and arginine 140 each bind ATP. Mg(2+) is bound at residue aspartate 201. Residue serine 203 coordinates ATP. Aspartate 204 is a Mg(2+) binding site. Residues glutamate 250 and tryptophan 298 each coordinate substrate.

This sequence belongs to the thiamine-monophosphate kinase family.

The enzyme catalyses thiamine phosphate + ATP = thiamine diphosphate + ADP. It functions in the pathway cofactor biosynthesis; thiamine diphosphate biosynthesis; thiamine diphosphate from thiamine phosphate: step 1/1. In terms of biological role, catalyzes the ATP-dependent phosphorylation of thiamine-monophosphate (TMP) to form thiamine-pyrophosphate (TPP), the active form of vitamin B1. The sequence is that of Thiamine-monophosphate kinase from Pyrococcus horikoshii (strain ATCC 700860 / DSM 12428 / JCM 9974 / NBRC 100139 / OT-3).